A 420-amino-acid polypeptide reads, in one-letter code: MVSRQEQFEQVQAVKKSINTASEEVKNQALLAMADHLVAATEEILAANALDMAAAKGKISDVMLDRLYLDADRIEAMARGIREVVALPDPIGEVLETSQLENGLVITKKRVAMGVIGIIYESRPNVTSDAAALTLKSGNAVVLRSGKDAYQTTHAIVTALKKGLETTTIHPNVIQLVEDTSRESSYAMMKAKGYLDLLIPRGGAGLINAVVENAIVPVIETGTGIVHVYVDKDADEDKALSIINNAKTSRPSVCNAMEVLLVHENKAASFLPRLEQVLVAERKEAGLEPIQFRLDSKASQFVSGQAAQAQDFDTEFLDYILAVKVVSSLEEAVAHIESHSTHHSDAIVTENAEAAAYFTDQVDSAAVYVNASTRFTDGGQFGLGCEMGISTQKLHARGPMGLKELTSYKYVVAGDGQIRE.

Belongs to the gamma-glutamyl phosphate reductase family.

It localises to the cytoplasm. It carries out the reaction L-glutamate 5-semialdehyde + phosphate + NADP(+) = L-glutamyl 5-phosphate + NADPH + H(+). The protein operates within amino-acid biosynthesis; L-proline biosynthesis; L-glutamate 5-semialdehyde from L-glutamate: step 2/2. Functionally, catalyzes the NADPH-dependent reduction of L-glutamate 5-phosphate into L-glutamate 5-semialdehyde and phosphate. The product spontaneously undergoes cyclization to form 1-pyrroline-5-carboxylate. This chain is Gamma-glutamyl phosphate reductase, found in Streptococcus pneumoniae (strain JJA).